A 228-amino-acid polypeptide reads, in one-letter code: Small ribosomal subunit protein uS10m (228 aa).

Residues 1-17 (MKRYMFGTLPRVQPKRC) constitute a mitochondrion transit peptide.

The protein belongs to the universal ribosomal protein uS10 family. As to quaternary structure, component of the mitochondrial small ribosomal subunit (mt-SSU). Mature yeast 74S mitochondrial ribosomes consist of a small (37S) and a large (54S) subunit. The 37S small subunit contains a 15S ribosomal RNA (15S mt-rRNA) and at least 32 different proteins. The 54S large subunit contains a 21S rRNA (21S mt-rRNA) and at least 45 different proteins.

The protein resides in the mitochondrion. Functionally, component of the mitochondrial ribosome (mitoribosome), a dedicated translation machinery responsible for the synthesis of mitochondrial genome-encoded proteins, including at least some of the essential transmembrane subunits of the mitochondrial respiratory chain. The mitoribosomes are attached to the mitochondrial inner membrane and translation products are cotranslationally integrated into the membrane. The polypeptide is Small ribosomal subunit protein uS10m (rsm10) (Schizosaccharomyces pombe (strain 972 / ATCC 24843) (Fission yeast)).